A 239-amino-acid chain; its full sequence is tRNA (guanine-N(7)-)-methyltransferase (239 aa).

Positions 69, 94, 121, and 144 each coordinate S-adenosyl-L-methionine. Aspartate 144 is a catalytic residue. Residues lysine 148, aspartate 180, and 217-220 (TKFE) each bind substrate.

The protein belongs to the class I-like SAM-binding methyltransferase superfamily. TrmB family. Monomer.

The enzyme catalyses guanosine(46) in tRNA + S-adenosyl-L-methionine = N(7)-methylguanosine(46) in tRNA + S-adenosyl-L-homocysteine. It participates in tRNA modification; N(7)-methylguanine-tRNA biosynthesis. Functionally, catalyzes the formation of N(7)-methylguanine at position 46 (m7G46) in tRNA. This is tRNA (guanine-N(7)-)-methyltransferase from Buchnera aphidicola subsp. Acyrthosiphon pisum (strain Tuc7).